Consider the following 297-residue polypeptide: MYAQPVTNTKEVKWQKVLYERQPFPDNYVDRRFLEELRKNIHARKYQYWAVVFESSVVIQQLCSVCVFVVIWWYMDEGLLAPHWLLGTGLASSLIGYVLFDLIDGGEGRKKSGQTRWADLKSALVFITFTYGFSPVLKTLTESVSTDTIYAMSVFMLLGHLIFFDYGANAAIVSSTLSLNMAIFASVCLASRLPRSLHAFIMVTFAIQIFALWPMLQKKLKACTPRSYVGVTLLFAFSAVGGLLSISAVGAVLFALLLMSISCLCPFYLIRLQLFKENIHGPWDEAEIKEDLSRFLS.

8 consecutive transmembrane segments (helical) span residues 51 to 71 (VVFE…FVVI), 80 to 100 (LAPH…YVLF), 117 to 137 (WADL…SPVL), 153 to 173 (SVFM…AAIV), 174 to 194 (SSTL…SRLP), 196 to 216 (SLHA…WPML), 227 to 244 (SYVG…GGLL), and 250 to 270 (GAVL…FYLI).

Belongs to the PIGC family. Component of the glycosylphosphatidylinositol-N-acetylglucosaminyltransferase (GPI-GnT) complex composed at least by PIGA, PIGC, PIGH, PIGP, PIGQ, PIGY and DPM2. Interacts with PIGQ. Interacts with the heterodimer PIGA:PIGH.

It localises to the endoplasmic reticulum membrane. The protein operates within glycolipid biosynthesis; glycosylphosphatidylinositol-anchor biosynthesis. In terms of biological role, part of the glycosylphosphatidylinositol-N-acetylglucosaminyltransferase (GPI-GnT) complex that catalyzes the transfer of N-acetylglucosamine from UDP-N-acetylglucosamine to phosphatidylinositol and participates in the first step of GPI biosynthesis. In Homo sapiens (Human), this protein is Phosphatidylinositol N-acetylglucosaminyltransferase subunit C.